A 312-amino-acid chain; its full sequence is Phosphoribosylglycinamide formyltransferase, chloroplastic (312 aa).

A chloroplast-targeting transit peptide spans 1-73 (MEAQQIISRF…EVCSSSWRIW (73 aa)). 109 to 111 (GSN) is a binding site for N(1)-(5-phospho-beta-D-ribosyl)glycinamide. (6R)-10-formyltetrahydrofolate contacts are provided by residues Lys-162, 187–190 (LKLI), and Asn-204. Residue His-206 is the Proton donor of the active site. Residue Asp-247 coordinates (6R)-10-formyltetrahydrofolate. N(1)-(5-phospho-beta-D-ribosyl)glycinamide is bound at residue Glu-276.

The protein belongs to the GART family.

The protein resides in the plastid. The protein localises to the chloroplast. The enzyme catalyses N(1)-(5-phospho-beta-D-ribosyl)glycinamide + (6R)-10-formyltetrahydrofolate = N(2)-formyl-N(1)-(5-phospho-beta-D-ribosyl)glycinamide + (6S)-5,6,7,8-tetrahydrofolate + H(+). Its pathway is purine metabolism; IMP biosynthesis via de novo pathway; N(2)-formyl-N(1)-(5-phospho-D-ribosyl)glycinamide from N(1)-(5-phospho-D-ribosyl)glycinamide (10-formyl THF route): step 1/1. This chain is Phosphoribosylglycinamide formyltransferase, chloroplastic (PUR3), found in Vigna unguiculata (Cowpea).